We begin with the raw amino-acid sequence, 468 residues long: 6-phospho-beta-galactosidase (468 aa).

Residues Q19, H116, N159, E160, and N297 each contribute to the D-galactose 6-phosphate site. E160 (proton donor) is an active-site residue. The Nucleophile role is filled by E375. D-galactose 6-phosphate is bound by residues S428, W429, K435, and Y437.

The protein belongs to the glycosyl hydrolase 1 family.

The enzyme catalyses a 6-phospho-beta-D-galactoside + H2O = D-galactose 6-phosphate + an alcohol. It functions in the pathway carbohydrate metabolism; lactose degradation; D-galactose 6-phosphate and beta-D-glucose from lactose 6-phosphate: step 1/1. The polypeptide is 6-phospho-beta-galactosidase (Streptococcus gordonii (strain Challis / ATCC 35105 / BCRC 15272 / CH1 / DL1 / V288)).